The sequence spans 248 residues: uncharacterized protein (248 aa).

To M.jannaschii MJ1452.

This is an uncharacterized protein from Methanothermobacter thermautotrophicus (strain ATCC 29096 / DSM 1053 / JCM 10044 / NBRC 100330 / Delta H) (Methanobacterium thermoautotrophicum).